Reading from the N-terminus, the 376-residue chain is Chaperone protein DnaJ 2 (376 aa).

The J domain maps to 5-70 (DYYEVLGVNR…QKRAAYDRYG (66 aa)). The segment at 135–213 (GADKTIRIPT…CGGAGRVKRQ (79 aa)) adopts a CR-type zinc-finger fold. C148, C151, C165, C168, C187, C190, C201, and C204 together coordinate Zn(2+). CXXCXGXG motif repeat units lie at residues 148–155 (CETCHGSG), 165–172 (CPTCGGAG), 187–194 (CPKCHGTG), and 201–208 (CRDCGGAG).

This sequence belongs to the DnaJ family. In terms of assembly, homodimer. Zn(2+) is required as a cofactor.

Its subcellular location is the cytoplasm. Its function is as follows. Participates actively in the response to hyperosmotic and heat shock by preventing the aggregation of stress-denatured proteins and by disaggregating proteins, also in an autonomous, DnaK-independent fashion. Unfolded proteins bind initially to DnaJ; upon interaction with the DnaJ-bound protein, DnaK hydrolyzes its bound ATP, resulting in the formation of a stable complex. GrpE releases ADP from DnaK; ATP binding to DnaK triggers the release of the substrate protein, thus completing the reaction cycle. Several rounds of ATP-dependent interactions between DnaJ, DnaK and GrpE are required for fully efficient folding. Also involved, together with DnaK and GrpE, in the DNA replication of plasmids through activation of initiation proteins. The chain is Chaperone protein DnaJ 2 from Aromatoleum aromaticum (strain DSM 19018 / LMG 30748 / EbN1) (Azoarcus sp. (strain EbN1)).